Consider the following 382-residue polypeptide: UDP-N-acetylglucosamine--N-acetylmuramyl-(pentapeptide) pyrophosphoryl-undecaprenol N-acetylglucosamine transferase (382 aa).

UDP-N-acetyl-alpha-D-glucosamine is bound by residues 11-13, asparagine 117, arginine 160, serine 209, and glutamine 311; that span reads TGG.

The protein belongs to the glycosyltransferase 28 family. MurG subfamily.

Its subcellular location is the cell inner membrane. The catalysed reaction is di-trans,octa-cis-undecaprenyl diphospho-N-acetyl-alpha-D-muramoyl-L-alanyl-D-glutamyl-meso-2,6-diaminopimeloyl-D-alanyl-D-alanine + UDP-N-acetyl-alpha-D-glucosamine = di-trans,octa-cis-undecaprenyl diphospho-[N-acetyl-alpha-D-glucosaminyl-(1-&gt;4)]-N-acetyl-alpha-D-muramoyl-L-alanyl-D-glutamyl-meso-2,6-diaminopimeloyl-D-alanyl-D-alanine + UDP + H(+). Its pathway is cell wall biogenesis; peptidoglycan biosynthesis. Its function is as follows. Cell wall formation. Catalyzes the transfer of a GlcNAc subunit on undecaprenyl-pyrophosphoryl-MurNAc-pentapeptide (lipid intermediate I) to form undecaprenyl-pyrophosphoryl-MurNAc-(pentapeptide)GlcNAc (lipid intermediate II). The sequence is that of UDP-N-acetylglucosamine--N-acetylmuramyl-(pentapeptide) pyrophosphoryl-undecaprenol N-acetylglucosamine transferase from Rickettsia akari (strain Hartford).